The following is a 244-amino-acid chain: MKHSDVAVIIPSRLSSTRLKQKPLQLIGSITLIERVFKQVSQANLEHTYVTTDSEEIAKIIKKVGGKVIFTNSNIPTGTDRTYEAFKLIPNNQNINYIVNVQGDMPFIEPSSILKIIEYLKNSEYDIVTPVVKVDKESVEAASNVTVAVNSAGKALYFSRSLIPNGAEEFLYHVGIYGFCKSALEKFISIKPTFLEKTERLEQLRILENNIAIGTCLVNNVPISVDTEEDLQKAIKFYENISKL.

This sequence belongs to the KdsB family.

The protein localises to the cytoplasm. It carries out the reaction 3-deoxy-alpha-D-manno-oct-2-ulosonate + CTP = CMP-3-deoxy-beta-D-manno-octulosonate + diphosphate. The protein operates within nucleotide-sugar biosynthesis; CMP-3-deoxy-D-manno-octulosonate biosynthesis; CMP-3-deoxy-D-manno-octulosonate from 3-deoxy-D-manno-octulosonate and CTP: step 1/1. It participates in bacterial outer membrane biogenesis; lipopolysaccharide biosynthesis. Activates KDO (a required 8-carbon sugar) for incorporation into bacterial lipopolysaccharide in Gram-negative bacteria. This chain is 3-deoxy-manno-octulosonate cytidylyltransferase, found in Rickettsia canadensis (strain McKiel).